The following is a 77-amino-acid chain: UPF0291 protein OB1671 (77 aa).

Residues 56 to 77 (DPEGKDVTPQKLRDYQDRNKKH) are disordered. Residues 57–77 (PEGKDVTPQKLRDYQDRNKKH) show a composition bias toward basic and acidic residues.

Belongs to the UPF0291 family.

Its subcellular location is the cytoplasm. This chain is UPF0291 protein OB1671, found in Oceanobacillus iheyensis (strain DSM 14371 / CIP 107618 / JCM 11309 / KCTC 3954 / HTE831).